The chain runs to 689 residues: Glycine--tRNA ligase beta subunit (689 aa).

This sequence belongs to the class-II aminoacyl-tRNA synthetase family. As to quaternary structure, tetramer of two alpha and two beta subunits.

It localises to the cytoplasm. It catalyses the reaction tRNA(Gly) + glycine + ATP = glycyl-tRNA(Gly) + AMP + diphosphate. The protein is Glycine--tRNA ligase beta subunit of Photorhabdus laumondii subsp. laumondii (strain DSM 15139 / CIP 105565 / TT01) (Photorhabdus luminescens subsp. laumondii).